Here is a 610-residue protein sequence, read N- to C-terminus: Phosphoenolpyruvate carboxykinase [GTP] (610 aa).

Residues R82 and Y221–G223 each bind substrate. The Mn(2+) site is built by K230 and H250. S272 provides a ligand contact to substrate. A GTP-binding site is contributed by A273–N278. C274 is an active-site residue. Residue D297 coordinates Mn(2+). Residue N387 to R389 coordinates substrate. Residues R389, R420, and F515–N518 each bind GTP.

The protein belongs to the phosphoenolpyruvate carboxykinase [GTP] family. Monomer. The cofactor is Mn(2+).

Its subcellular location is the cytoplasm. It carries out the reaction oxaloacetate + GTP = phosphoenolpyruvate + GDP + CO2. It participates in carbohydrate biosynthesis; gluconeogenesis. Functionally, involved in the gluconeogenesis. Catalyzes the conversion of oxaloacetate (OAA) to phosphoenolpyruvate (PEP), the rate-limiting step in the metabolic pathway that produces glucose from lactate and other precursors derived from the citric acid cycle. This chain is Phosphoenolpyruvate carboxykinase [GTP], found in Corynebacterium glutamicum (strain ATCC 13032 / DSM 20300 / JCM 1318 / BCRC 11384 / CCUG 27702 / LMG 3730 / NBRC 12168 / NCIMB 10025 / NRRL B-2784 / 534).